The primary structure comprises 334 residues: Beta-1,3-N-acetylglucosaminyltransferase radical fringe (334 aa).

At 1–6 (MSRVRR) the chain is on the cytoplasmic side. Residues 7-29 (VLCRACLALAAVLAVLLLLPLPL) form a helical; Signal-anchor for type II membrane protein membrane-spanning segment. At 30–334 (PLPLPLPRAP…MKNRGKEAFQ (305 aa)) the chain is on the lumenal side. Arg77 is a binding site for substrate. A glycan (N-linked (GlcNAc...) asparagine) is linked at Asn116. 2 disulfides stabilise this stretch: Cys117–Cys128 and Cys146–Cys210. Residue Asp150 coordinates substrate. Asp151 is a binding site for Mn(2+). The active site involves Asp240. His264 is a Mn(2+) binding site. An intrachain disulfide couples Cys314 to Cys323.

Belongs to the glycosyltransferase 31 family. Requires Mn(2+) as cofactor. In terms of tissue distribution, most abundantly expressed in adult brain. Expressed in most neurons of the brain but not in glial cells. Also detected to a lower extent in adult lung and kidney.

The protein localises to the golgi apparatus membrane. It carries out the reaction 3-O-(alpha-L-fucosyl)-L-threonyl-[EGF-like domain protein] + UDP-N-acetyl-alpha-D-glucosamine = 3-O-(N-acetyl-beta-D-glucosaminyl-(1-&gt;3)-alpha-L-fucosyl)-L-threonyl-[EGF-like domain protein] + UDP + H(+). The catalysed reaction is 3-O-(alpha-L-fucosyl)-L-seryl-[EGF-like domain protein] + UDP-N-acetyl-alpha-D-glucosamine = 3-O-(N-acetyl-beta-D-glucosaminyl-(1-&gt;3)-alpha-L-fucosyl)-L-seryl-[EGF-like domain protein] + UDP + H(+). Its function is as follows. Glycosyltransferase that initiates the elongation of O-linked fucose residues attached to EGF-like repeats in the extracellular domain of Notch molecules. Modulates NOTCH1 activity by modifying O-fucose residues at specific EGF-like domains resulting in enhancement of NOTCH1 activation by DLL1 and JAG1. Inhibits Notch signaling in postmitotic neurons of the brain. It may play a role in adult brain and in neurogenesis. It may play a role in limb development. The sequence is that of Beta-1,3-N-acetylglucosaminyltransferase radical fringe from Rattus norvegicus (Rat).